We begin with the raw amino-acid sequence, 279 residues long: Vomeronasal type-1 receptor A8 (279 aa).

The Extracellular segment spans residues M1–S19. A helical membrane pass occupies residues E20–I40. Over R41–D49 the chain is Cytoplasmic. The chain crosses the membrane as a helical span at residues L50–T70. Residues E71–R93 are Extracellular-facing. Residues C85 and C172 are joined by a disulfide bond. The helical transmembrane segment at F94 to L114 threads the bilayer. The Cytoplasmic portion of the chain corresponds to C115–Y134. The helical transmembrane segment at F135 to I155 threads the bilayer. At P156–N159 the chain is on the extracellular side. N-linked (GlcNAc...) asparagine glycosylation is present at N159. A helical transmembrane segment spans residues I160–S180. Residues M181–T187 are Cytoplasmic-facing. A helical transmembrane segment spans residues L188–A208. Topologically, residues T209–R238 are extracellular. A helical transmembrane segment spans residues T239 to Y259. Topologically, residues S260 to S279 are cytoplasmic.

This sequence belongs to the G-protein coupled receptor 1 family. As to expression, expressed in a subset of sensory neurons located in the apical layer of the vomeronasal organ.

It localises to the cell membrane. In terms of biological role, putative pheromone receptor implicated in the regulation of social and reproductive behavior. The chain is Vomeronasal type-1 receptor A8 from Mus musculus (Mouse).